Consider the following 534-residue polypeptide: Protein tweety homolog 2 (534 aa).

Residues 1 to 44 are Extracellular-facing; that stretch reads MATARVEYIAPWWVYWLHNLPHVDFSLQRESGDFNPKDPGYQQT. The chain crosses the membrane as a helical span at residues 45 to 65; the sequence is LLFVALFIALCAAVNLLFVSG. The Cytoplasmic segment spans residues 66–87; it reads YLICLCCCKKEDETETKMTSSC. Residues 88 to 108 traverse the membrane as a helical segment; sequence CVTWTAAVSGLLCCAAVGIGF. Residues 109–213 lie on the Extracellular side of the membrane; it reads YGNSETNDGV…NASIIEYYRW (105 aa). Ca(2+)-binding residues include glutamate 113 and aspartate 116. Asparagine 129 carries N-linked (GlcNAc...) asparagine glycosylation. The RGD motif lies at 164–166; sequence RGD. Residues asparagine 197 and asparagine 204 are each glycosylated (N-linked (GlcNAc...) asparagine). The helical transmembrane segment at 214 to 234 threads the bilayer; that stretch reads LSYLILFITDVVICLVTCLGL. Residues 235–240 lie on the Cytoplasmic side of the membrane; the sequence is AKKSKC. The chain crosses the membrane as a helical span at residues 241-261; the sequence is LLLTMLCCGLIALMLSWASLA. The Extracellular segment spans residues 262-388; the sequence is LETSSAVGTS…IGICYDGVEG (127 aa). Cystine bridges form between cysteine 274–cysteine 382 and cysteine 300–cysteine 367. A glycan (N-linked (GlcNAc...) asparagine) is linked at asparagine 352. Residues 389-409 traverse the membrane as a helical segment; that stretch reads LLYLSLFSLLAAVAFTAMVCA. Residues 410-534 lie on the Cytoplasmic side of the membrane; it reads MPRAWKHLAA…PNIYSNVFPA (125 aa).

It belongs to the tweety family. As to quaternary structure, forms cis-homodimers in the presence of Ca(+2) and forms monomers and trans-dimers in the absence of Ca(2+).

Its subcellular location is the cell membrane. It carries out the reaction chloride(in) = chloride(out). The enzyme catalyses L-glutamate(out) = L-glutamate(in). In terms of biological role, may act as a calcium-independent, swelling-dependent volume-regulated anion channel (VRAC-swell) which plays a pivotal role in the process of regulatory volume decrease (RVD) in the brain through the efflux of anions like chloride and organic osmolytes like glutamate. Probable large-conductance Ca(2+)-activated chloride channel. In Xenopus laevis (African clawed frog), this protein is Protein tweety homolog 2 (ttyh2).